A 270-amino-acid chain; its full sequence is Diaminopimelate epimerase (270 aa).

The substrate site is built by Asn-15, Gln-49, and Asn-66. The active-site Proton donor is Cys-75. Residues 76–77 (GN), Asn-155, Asn-187, and 204–205 (ER) each bind substrate. The Proton acceptor role is filled by Cys-213. 214-215 (GS) is a substrate binding site.

The protein belongs to the diaminopimelate epimerase family. In terms of assembly, homodimer.

The protein localises to the cytoplasm. It carries out the reaction (2S,6S)-2,6-diaminopimelate = meso-2,6-diaminopimelate. The protein operates within amino-acid biosynthesis; L-lysine biosynthesis via DAP pathway; DL-2,6-diaminopimelate from LL-2,6-diaminopimelate: step 1/1. Its function is as follows. Catalyzes the stereoinversion of LL-2,6-diaminopimelate (L,L-DAP) to meso-diaminopimelate (meso-DAP), a precursor of L-lysine and an essential component of the bacterial peptidoglycan. The chain is Diaminopimelate epimerase from Rickettsia felis (strain ATCC VR-1525 / URRWXCal2) (Rickettsia azadi).